A 407-amino-acid chain; its full sequence is Imidazolonepropionase (407 aa).

His-74 and His-76 together coordinate Fe(3+). 2 residues coordinate Zn(2+): His-74 and His-76. Positions 83, 146, and 179 each coordinate 4-imidazolone-5-propanoate. Tyr-146 is an N-formimidoyl-L-glutamate binding site. A Fe(3+)-binding site is contributed by His-244. Position 244 (His-244) interacts with Zn(2+). Gln-247 is a binding site for 4-imidazolone-5-propanoate. Asp-319 is a binding site for Fe(3+). Asp-319 contributes to the Zn(2+) binding site. Asn-321 and Gly-323 together coordinate N-formimidoyl-L-glutamate. Thr-324 contributes to the 4-imidazolone-5-propanoate binding site.

This sequence belongs to the metallo-dependent hydrolases superfamily. HutI family. Zn(2+) serves as cofactor. The cofactor is Fe(3+).

Its subcellular location is the cytoplasm. It catalyses the reaction 4-imidazolone-5-propanoate + H2O = N-formimidoyl-L-glutamate. It functions in the pathway amino-acid degradation; L-histidine degradation into L-glutamate; N-formimidoyl-L-glutamate from L-histidine: step 3/3. Its function is as follows. Catalyzes the hydrolytic cleavage of the carbon-nitrogen bond in imidazolone-5-propanoate to yield N-formimidoyl-L-glutamate. It is the third step in the universal histidine degradation pathway. In Salmonella enteritidis PT4 (strain P125109), this protein is Imidazolonepropionase.